The sequence spans 746 residues: NAD(P)H-quinone oxidoreductase subunit 5, chloroplastic (746 aa).

A run of 16 helical transmembrane segments spans residues 9–29 (WIIP…LLLF), 40–60 (WTFL…YLSI), 89–109 (IDPL…LVLI), 125–145 (FAYM…SNLI), 147–167 (VYFF…FWFT), 185–205 (GDFG…SFEF), 221–241 (VNLL…IAKS), 258–278 (TPIS…FLVA), 280–300 (LLPL…IGII), 327–347 (LGYM…FHLI), 354–374 (ALLF…VGYS), 396–416 (TAFL…CFWS), 425–445 (LLFS…TAFY), 547–567 (ILFP…IGIP), 608–628 (FSVS…KPFY), and 723–743 (YLFL…FFYF).

It belongs to the complex I subunit 5 family. NDH is composed of at least 16 different subunits, 5 of which are encoded in the nucleus.

It is found in the plastid. It localises to the chloroplast thylakoid membrane. The catalysed reaction is a plastoquinone + NADH + (n+1) H(+)(in) = a plastoquinol + NAD(+) + n H(+)(out). The enzyme catalyses a plastoquinone + NADPH + (n+1) H(+)(in) = a plastoquinol + NADP(+) + n H(+)(out). NDH shuttles electrons from NAD(P)H:plastoquinone, via FMN and iron-sulfur (Fe-S) centers, to quinones in the photosynthetic chain and possibly in a chloroplast respiratory chain. The immediate electron acceptor for the enzyme in this species is believed to be plastoquinone. Couples the redox reaction to proton translocation, and thus conserves the redox energy in a proton gradient. This chain is NAD(P)H-quinone oxidoreductase subunit 5, chloroplastic (ndhF), found in Arabidopsis thaliana (Mouse-ear cress).